The sequence spans 159 residues: V-type proton ATPase 16 kDa proteolipid subunit c (159 aa).

Residues 1 to 12 lie on the Lumenal side of the membrane; sequence MSSEVSSDNPIY. A helical membrane pass occupies residues 13–35; sequence GPFFGVMGAASAIIFSALGAAYG. Residues 36-57 lie on the Cytoplasmic side of the membrane; the sequence is TAKSGTGIAAMSVMRPELIMKS. Residues 58–78 traverse the membrane as a helical segment; sequence IIPVVMAGIIAIYGLVVAVLI. Residues 79–96 are Lumenal-facing; sequence AGALEEPSKYSLYRGFIH. The chain crosses the membrane as a helical span at residues 97–118; sequence LGAGLAVGFSGLAAGFAIGIVG. The Cytoplasmic segment spans residues 119–130; sequence DAGVRGTAQQPR. Residues 131 to 156 form a helical membrane-spanning segment; the sequence is LFVGMILILIFAEVLGLYGLIVAIYL. Topologically, residues 157–159 are lumenal; it reads YTK.

The protein belongs to the V-ATPase proteolipid subunit family. In terms of assembly, V-ATPase is a heteromultimeric enzyme made up of two complexes: the ATP-hydrolytic V1 complex and the proton translocation V0 complex. The V1 complex consists of three catalytic AB heterodimers that form a heterohexamer, three peripheral stalks each consisting of EG heterodimers, one central rotor including subunits D and F, and the regulatory subunits C and H. The proton translocation complex V0 consists of the proton transport subunit a, a ring of proteolipid subunits c9c'', rotary subunit d, subunits e and f, and the accessory subunits VhaAC45 and ATP6AP2. In terms of tissue distribution, expressed in the larval middle mid-gut; predominantly in the copper cell region with lower levels of expression in the interstitial cells.

The protein resides in the membrane. Functionally, proton-conducting pore forming subunit of the V0 complex of vacuolar(H+)-ATPase (V-ATPase), a multisubunit enzyme composed of a peripheral complex (V1) that hydrolyzes ATP and a membrane integral complex (V0) that translocates protons. V-ATPase is responsible for acidifying and maintaining the pH of intracellular compartments and in some cell types, is targeted to the plasma membrane, where it is responsible for acidifying the extracellular environment. In enterocytes, acts as part of a pHCl-2 sensory pathway which mediates Tor-dependent larval growth and metabolism in response to zinc availability. Likely acts in maintaining enterocyte lysosomal acidification which consequently promotes Tor activation at the lysosome membrane. The sequence is that of V-type proton ATPase 16 kDa proteolipid subunit c (Vha16-1) from Drosophila melanogaster (Fruit fly).